The following is an 808-amino-acid chain: DNA gyrase subunit B (808 aa).

The Toprim domain occupies 429 to 544 (SELFIVEGDS…KGYLYIAQPP (116 aa)). The Mg(2+) site is built by Glu435, Asp509, and Asp511.

The protein belongs to the type II topoisomerase GyrB family. As to quaternary structure, heterotetramer, composed of two GyrA and two GyrB chains. In the heterotetramer, GyrA contains the active site tyrosine that forms a transient covalent intermediate with DNA, while GyrB binds cofactors and catalyzes ATP hydrolysis. The cofactor is Mg(2+). Mn(2+) is required as a cofactor. Ca(2+) serves as cofactor.

It localises to the cytoplasm. The catalysed reaction is ATP-dependent breakage, passage and rejoining of double-stranded DNA.. Its function is as follows. A type II topoisomerase that negatively supercoils closed circular double-stranded (ds) DNA in an ATP-dependent manner to modulate DNA topology and maintain chromosomes in an underwound state. Negative supercoiling favors strand separation, and DNA replication, transcription, recombination and repair, all of which involve strand separation. Also able to catalyze the interconversion of other topological isomers of dsDNA rings, including catenanes and knotted rings. Type II topoisomerases break and join 2 DNA strands simultaneously in an ATP-dependent manner. This Rickettsia felis (strain ATCC VR-1525 / URRWXCal2) (Rickettsia azadi) protein is DNA gyrase subunit B.